The following is a 595-amino-acid chain: Apolipoprotein N-acyltransferase 2 (595 aa).

A run of 5 helical transmembrane segments spans residues 30-50, 63-83, 95-115, 167-187, and 210-230; these read FLAF…FGFF, LFFH…HWII, VVAI…FPIF, AEIT…YTLF, and FITL…FLFK. Positions 241–555 constitute a CN hydrolase domain; it reads LNVLIVQPDA…AEALSETIDV (315 aa). E293 functions as the Proton acceptor in the catalytic mechanism. K372 is a catalytic residue. Catalysis depends on C463, which acts as the Nucleophile. The helical transmembrane segment at 569–589 threads the bilayer; the sequence is LIPWLMLFLTGIYYLNLLIGI.

The protein belongs to the CN hydrolase family. Apolipoprotein N-acyltransferase subfamily.

The protein localises to the cell inner membrane. It catalyses the reaction N-terminal S-1,2-diacyl-sn-glyceryl-L-cysteinyl-[lipoprotein] + a glycerophospholipid = N-acyl-S-1,2-diacyl-sn-glyceryl-L-cysteinyl-[lipoprotein] + a 2-acyl-sn-glycero-3-phospholipid + H(+). It functions in the pathway protein modification; lipoprotein biosynthesis (N-acyl transfer). In terms of biological role, catalyzes the phospholipid dependent N-acylation of the N-terminal cysteine of apolipoprotein, the last step in lipoprotein maturation. This Leptospira interrogans serogroup Icterohaemorrhagiae serovar copenhageni (strain Fiocruz L1-130) protein is Apolipoprotein N-acyltransferase 2.